The chain runs to 316 residues: CRISPR-associated endonuclease Cas1 (316 aa).

Mn(2+)-binding residues include glutamate 143, histidine 206, and glutamate 221.

It belongs to the CRISPR-associated endonuclease Cas1 family. Homodimer, forms a heterotetramer with a Cas2 homodimer. The cofactor is Mg(2+). Mn(2+) is required as a cofactor.

CRISPR (clustered regularly interspaced short palindromic repeat), is an adaptive immune system that provides protection against mobile genetic elements (viruses, transposable elements and conjugative plasmids). CRISPR clusters contain spacers, sequences complementary to antecedent mobile elements, and target invading nucleic acids. CRISPR clusters are transcribed and processed into CRISPR RNA (crRNA). Acts as a dsDNA endonuclease. Involved in the integration of spacer DNA into the CRISPR cassette. The protein is CRISPR-associated endonuclease Cas1 of Aquifex aeolicus (strain VF5).